The sequence spans 340 residues: PRKC apoptosis WT1 regulator protein (340 aa).

Residues 1-18 (MATGGYRTSSGLGGSTTD) show a composition bias toward polar residues. Positions 1–253 (MATGGYRTSS…TDRSGFPRYN (253 aa)) are disordered. Residues 47–82 (SDAAGKPPAGALGTPAAAAANELNNNLPGGAPAAPA) show a composition bias toward low complexity. The short motif at 68–72 (ELNNN) is the B30.2/SPRY domain-binding motif element. At Ser108 the chain carries Phosphoserine. A Nuclear localization signal motif is present at residues 145-161 (RKGKGQIEKRKLREKRR). The selective for apoptosis induction in cancer cells (SAC) stretch occupies residues 145 to 203 (RKGKGQIEKRKLREKRRSTGVVNIPAAECLDEYEDDEAGQKERKREDAITQQNTIQNEA). Residue Thr163 is modified to Phosphothreonine; by PKA. The segment covering 182-192 (AGQKERKREDA) has biased composition (basic and acidic residues). Positions 186–206 (ERKREDAITQQNTIQNEAVNL) form a coiled coil. The segment covering 193 to 203 (ITQQNTIQNEA) has biased composition (polar residues). Ser231 carries the post-translational modification Phosphoserine. Over residues 242–253 (SRTDRSGFPRYN) the composition is skewed to basic and acidic residues. The interval 300 to 340 (IGKLKEEIDLLNRDLDDIEDENEQLKQENKTLLKVVGQLTR) is leucine-zipper.

As to quaternary structure, homooligomer. Interacts (via the C-terminal region) with WT1. Interacts with THAP1. Interacts with AATF. Interacts with BACE1. Interacts with SPSB1 (via B30.2/SPRY domain); this interaction is direct and occurs in association with the Elongin BC complex. Interacts with SPSB2 (via B30.2/SPRY domain); this interaction occurs in association with the Elongin BC complex. Interacts with SPSB4 (via B30.2/SPRY domain); this interaction occurs in association with the Elongin BC complex. Component of a ternary complex composed of SQSTM1 and PRKCZ. Interacts with actin. In terms of processing, preferentially phosphorylated at the Thr-163 by PKC in cancer cells. In terms of tissue distribution, widely expressed. Expression is elevated in various neurodegenerative diseases such as amyotrophic lateral sclerosis, Alzheimer, Parkinson and Huntington diseases and stroke. Down-regulated in several cancers.

Its subcellular location is the cytoplasm. It is found in the nucleus. Functionally, pro-apoptotic protein capable of selectively inducing apoptosis in cancer cells, sensitizing the cells to diverse apoptotic stimuli and causing regression of tumors in animal models. Induces apoptosis in certain cancer cells by activation of the Fas prodeath pathway and coparallel inhibition of NF-kappa-B transcriptional activity. Inhibits the transcriptional activation and augments the transcriptional repression mediated by WT1. Down-regulates the anti-apoptotic protein BCL2 via its interaction with WT1. Also seems to be a transcriptional repressor by itself. May be directly involved in regulating the amyloid precursor protein (APP) cleavage activity of BACE1. The sequence is that of PRKC apoptosis WT1 regulator protein (PAWR) from Homo sapiens (Human).